The sequence spans 107 residues: UPF0060 membrane protein glr4174 (107 aa).

Transmembrane regions (helical) follow at residues 1 to 21, 26 to 46, 58 to 78, and 87 to 107; these read MALL…FAFW, LGKN…FAWL, AYAA…WLVE, and LAGA…DRSP.

The protein belongs to the UPF0060 family.

The protein localises to the cell inner membrane. The protein is UPF0060 membrane protein glr4174 of Gloeobacter violaceus (strain ATCC 29082 / PCC 7421).